We begin with the raw amino-acid sequence, 356 residues long: Inositol monophosphatase 3 (356 aa).

The helical transmembrane segment at 11-31 (LGIGVFCLLGLGVLYHVYSGF) threads the bilayer. Mg(2+) is bound by residues glutamate 127, aspartate 167, leucine 169, aspartate 170, and aspartate 293. Glutamate 127 contributes to the substrate binding site. Residues 169-172 (LDAT) and aspartate 293 contribute to the substrate site.

Belongs to the inositol monophosphatase superfamily. Mg(2+) serves as cofactor.

Its subcellular location is the membrane. It catalyses the reaction a myo-inositol phosphate + H2O = myo-inositol + phosphate. It participates in polyol metabolism; myo-inositol biosynthesis; myo-inositol from D-glucose 6-phosphate: step 2/2. This is Inositol monophosphatase 3 (bpnt2) from Xenopus tropicalis (Western clawed frog).